The chain runs to 105 residues: Small ribosomal subunit protein uS10 (105 aa).

It belongs to the universal ribosomal protein uS10 family. In terms of assembly, part of the 30S ribosomal subunit.

Functionally, involved in the binding of tRNA to the ribosomes. The protein is Small ribosomal subunit protein uS10 of Chlamydia muridarum (strain MoPn / Nigg).